The sequence spans 309 residues: Tyrosine recombinase XerD (309 aa).

Residues 3–88 (MRASLAIENF…ALRQFFRFLY (86 aa)) form the Core-binding (CB) domain. In terms of domain architecture, Tyr recombinase spans 109–302 (PLPKIMSVEN…LEERLHKLVS (194 aa)). Residues Arg158, Lys182, His254, Arg257, and His280 contribute to the active site. The O-(3'-phospho-DNA)-tyrosine intermediate role is filled by Tyr289.

This sequence belongs to the 'phage' integrase family. XerD subfamily. Forms a cyclic heterotetrameric complex composed of two molecules of XerC and two molecules of XerD.

It is found in the cytoplasm. In terms of biological role, site-specific tyrosine recombinase, which acts by catalyzing the cutting and rejoining of the recombining DNA molecules. The XerC-XerD complex is essential to convert dimers of the bacterial chromosome into monomers to permit their segregation at cell division. It also contributes to the segregational stability of plasmids. This chain is Tyrosine recombinase XerD, found in Brucella suis biovar 1 (strain 1330).